Reading from the N-terminus, the 239-residue chain is 1-(5-phosphoribosyl)-5-[(5-phosphoribosylamino)methylideneamino] imidazole-4-carboxamide isomerase (239 aa).

Catalysis depends on Asp-8, which acts as the Proton acceptor. Asp-129 acts as the Proton donor in catalysis.

This sequence belongs to the HisA/HisF family.

Its subcellular location is the cytoplasm. It catalyses the reaction 1-(5-phospho-beta-D-ribosyl)-5-[(5-phospho-beta-D-ribosylamino)methylideneamino]imidazole-4-carboxamide = 5-[(5-phospho-1-deoxy-D-ribulos-1-ylimino)methylamino]-1-(5-phospho-beta-D-ribosyl)imidazole-4-carboxamide. Its pathway is amino-acid biosynthesis; L-histidine biosynthesis; L-histidine from 5-phospho-alpha-D-ribose 1-diphosphate: step 4/9. The polypeptide is 1-(5-phosphoribosyl)-5-[(5-phosphoribosylamino)methylideneamino] imidazole-4-carboxamide isomerase (Pelagibacter ubique (strain HTCC1062)).